Reading from the N-terminus, the 425-residue chain is Spermatogenesis- and oogenesis-specific basic helix-loop-helix-containing protein 2 (425 aa).

The bHLH domain occupies 201–252; the sequence is KISLLHSSKEKLRRERIKYCCEQLRTLLPYVKGRKNDAASVLEATVDYVKYI.

As to quaternary structure, forms both hetero- and homodimers with SOHLH1.

The protein localises to the nucleus. It is found in the cytoplasm. Transcription regulator of both male and female germline differentiation. Suppresses genes involved in spermatogonial stem cells maintenance, and induces genes important for spermatogonial differentiation. Coordinates oocyte differentiation without affecting meiosis I. The chain is Spermatogenesis- and oogenesis-specific basic helix-loop-helix-containing protein 2 (SOHLH2) from Homo sapiens (Human).